Reading from the N-terminus, the 107-residue chain is Iron-binding protein IscA (107 aa).

Positions 35, 99, and 101 each coordinate Fe cation.

This sequence belongs to the HesB/IscA family. In terms of assembly, homodimer; may form tetramers and higher multimers. Requires Fe cation as cofactor.

In terms of biological role, is able to transfer iron-sulfur clusters to apo-ferredoxin. Multiple cycles of [2Fe2S] cluster formation and transfer are observed, suggesting that IscA acts catalytically. Recruits intracellular free iron so as to provide iron for the assembly of transient iron-sulfur cluster in IscU in the presence of IscS, L-cysteine and the thioredoxin reductase system TrxA/TrxB. The sequence is that of Iron-binding protein IscA from Salmonella newport (strain SL254).